The primary structure comprises 506 residues: Sporulation kinase D (506 aa).

2 helical membrane passes run V17–E37 and L250–Y270. The 208-residue stretch at S298 to A505 folds into the Histidine kinase domain. At H301 the chain carries Phosphohistidine; by autocatalysis.

As to quaternary structure, oligomerizes, probably forms homodimers; oligomerization is assisted by FloT. Interacts with FloT.

It localises to the cell membrane. The enzyme catalyses ATP + protein L-histidine = ADP + protein N-phospho-L-histidine.. Functionally, phosphorylates the sporulation-regulatory protein spo0F and, to a minor extent, is responsible for heterogeneous expression of spo0A during logarithmical growth. Also phosphorylates spo0A under biofilm growth conditions. The polypeptide is Sporulation kinase D (kinD) (Bacillus subtilis (strain 168)).